An 86-amino-acid polypeptide reads, in one-letter code: UPF0297 protein CA_C1679 (86 aa).

The protein belongs to the UPF0297 family.

This is UPF0297 protein CA_C1679 from Clostridium acetobutylicum (strain ATCC 824 / DSM 792 / JCM 1419 / IAM 19013 / LMG 5710 / NBRC 13948 / NRRL B-527 / VKM B-1787 / 2291 / W).